A 152-amino-acid chain; its full sequence is MKTFTAKPADIEKKWILIDAEGIVLGRLASIVATRLRGKHKATFTPHMDMGDNVIVINADKIQLTGNKRNKPNYWHTGYPGGIKSRTTGQILEGKFPERVVTQAVKRMLPGGPLSRQQMTNLRVYAGAEHPHEAQSPEVLDLASKNPKNTRS.

The segment at 130–152 is disordered; sequence HPHEAQSPEVLDLASKNPKNTRS.

The protein belongs to the universal ribosomal protein uL13 family. Part of the 50S ribosomal subunit.

In terms of biological role, this protein is one of the early assembly proteins of the 50S ribosomal subunit, although it is not seen to bind rRNA by itself. It is important during the early stages of 50S assembly. This chain is Large ribosomal subunit protein uL13, found in Dinoroseobacter shibae (strain DSM 16493 / NCIMB 14021 / DFL 12).